Consider the following 671-residue polypeptide: tRNA 5-methylaminomethyl-2-thiouridine biosynthesis bifunctional protein MnmC (671 aa).

A tRNA (mnm(5)s(2)U34)-methyltransferase region spans residues 1-245 (MVNVMNTLSF…KREMLWGEKP (245 aa)). The tract at residues 272–671 (VGGGVASLFV…RKLLKGSKVE (400 aa)) is FAD-dependent cmnm(5)s(2)U34 oxidoreductase.

It in the N-terminal section; belongs to the methyltransferase superfamily. tRNA (mnm(5)s(2)U34)-methyltransferase family. This sequence in the C-terminal section; belongs to the DAO family. It depends on FAD as a cofactor.

The protein resides in the cytoplasm. The enzyme catalyses 5-aminomethyl-2-thiouridine(34) in tRNA + S-adenosyl-L-methionine = 5-methylaminomethyl-2-thiouridine(34) in tRNA + S-adenosyl-L-homocysteine + H(+). Functionally, catalyzes the last two steps in the biosynthesis of 5-methylaminomethyl-2-thiouridine (mnm(5)s(2)U) at the wobble position (U34) in tRNA. Catalyzes the FAD-dependent demodification of cmnm(5)s(2)U34 to nm(5)s(2)U34, followed by the transfer of a methyl group from S-adenosyl-L-methionine to nm(5)s(2)U34, to form mnm(5)s(2)U34. In Actinobacillus pleuropneumoniae serotype 3 (strain JL03), this protein is tRNA 5-methylaminomethyl-2-thiouridine biosynthesis bifunctional protein MnmC.